The sequence spans 570 residues: Zinc finger and BTB domain-containing protein 44 (570 aa).

Lys4 is covalently cross-linked (Glycyl lysine isopeptide (Lys-Gly) (interchain with G-Cter in SUMO2)). The region spanning 31–98 is the BTB domain; the sequence is CDITIRVQDK…AYTATLSINT (68 aa). Residues Ser135, Ser159, Ser161, Ser165, Ser191, and Ser194 each carry the phosphoserine modification. Disordered stretches follow at residues 194–220 and 243–267; these read SPVK…NRNQ and EKVK…RRMA. Residues 199–220 show a composition bias toward polar residues; that stretch reads GTQTSSPQVLNSSASYSENRNQ. The residue at position 200 (Thr200) is a Phosphothreonine. A Glycyl lysine isopeptide (Lys-Gly) (interchain with G-Cter in SUMO2) cross-link involves residue Lys290. Residues 295 to 369 are disordered; the sequence is SDEEVHEEVS…NAPPDDDDRL (75 aa). A compositionally biased stretch (low complexity) spans 304–318; that stretch reads SQPVSASQSSLSDQQ. The span at 352–361 shows a compositional bias: polar residues; that stretch reads TLQSTSSTNA. 4 C2H2-type zinc fingers span residues 399 to 421, 427 to 449, 455 to 479, and 487 to 511; these read FQCP…MLIH, FQCD…RLKH, FRCQ…VSRH, and YECK…SLNH.

The protein resides in the nucleus. Its function is as follows. May be involved in transcriptional regulation. The polypeptide is Zinc finger and BTB domain-containing protein 44 (ZBTB44) (Homo sapiens (Human)).